The sequence spans 564 residues: Mitochondrial distribution and morphology protein 34-1 (564 aa).

One can recognise an SMP-LTD domain in the interval 1 to 195 (MAFKFNWSPL…LPAIIHRLSL (195 aa)). Composition is skewed to polar residues over residues 297–322 (PDQNDSSASVMSPISPPLSRTQSQTG) and 329–352 (DNASTSSAQSRTPTGPTQSFSSYG). Disordered regions lie at residues 297 to 408 (PDQN…VTSA), 414 to 433 (HEQPDDPVTPPLSPESDQSL), and 452 to 473 (DLSSEIVRDRAEPSEPRNPFNT). The span at 359–371 (RHSRAHARRRKKR) shows a compositional bias: basic residues. Residues 383-394 (SDSASVSVSDES) show a composition bias toward low complexity. Polar residues predominate over residues 396–408 (YTESASAPSVTSA). A compositionally biased stretch (basic and acidic residues) spans 452–466 (DLSSEIVRDRAEPSE).

This sequence belongs to the MDM34 family. In terms of assembly, component of the ER-mitochondria encounter structure (ERMES) or MDM complex, composed of mmm1, mdm10, mdm12 and mdm34.

The protein localises to the mitochondrion outer membrane. In terms of biological role, component of the ERMES/MDM complex, which serves as a molecular tether to connect the endoplasmic reticulum (ER) and mitochondria. Components of this complex are involved in the control of mitochondrial shape and protein biogenesis, and function in nonvesicular lipid trafficking between the ER and mitochondria. Mdm34 is required for the interaction of the ER-resident membrane protein mmm1 and the outer mitochondrial membrane-resident beta-barrel protein mdm10. The polypeptide is Mitochondrial distribution and morphology protein 34-1 (Penicillium rubens (strain ATCC 28089 / DSM 1075 / NRRL 1951 / Wisconsin 54-1255) (Penicillium chrysogenum)).